The primary structure comprises 444 residues: Acyl-CoA 6-desaturase (444 aa).

Topologically, residues 1–130 (MGGGGQQTDR…EAEGCFKTQP (130 aa)) are cytoplasmic. A Cytochrome b5 heme-binding domain is found at 18–95 (FSSYTWEEVQ…LKPLLIGELE (78 aa)). The helical transmembrane segment at 131–151 (LFFALHLGHILLLEAIAFMMV) threads the bilayer. The Lumenal segment spans residues 152 to 157 (WYFGTG). A helical transmembrane segment spans residues 158 to 178 (WINTLIVAVILATAQSQAGWL). Over 179–264 (QHDFGHLSVF…KHLPYNHQHK (86 aa)) the chain is Cytoplasmic. The Histidine box-1 motif lies at 180 to 184 (HDFGH). Residues 217–221 (HFQHH) carry the Histidine box-2 motif. The chain crosses the membrane as a helical span at residues 265–285 (YFFFIGPPLLIPVYFQFQIFH). The Lumenal portion of the chain corresponds to 286-305 (NMISHGMWVDLLWCISYYVR). A helical transmembrane segment spans residues 306–326 (YFLCYTQFYGVFWAIILFNFV). Residues 327 to 444 (RFMESHWFVW…ELWLDAYLNK (118 aa)) lie on the Cytoplasmic side of the membrane. The Histidine box-3 motif lies at 382–386 (QIEHH).

It belongs to the fatty acid desaturase type 1 family.

The protein localises to the endoplasmic reticulum membrane. It catalyses the reaction (9Z,12Z)-octadecadienoyl-CoA + 2 Fe(II)-[cytochrome b5] + O2 + 2 H(+) = (6Z,9Z,12Z)-octadecatrienoyl-CoA + 2 Fe(III)-[cytochrome b5] + 2 H2O. The catalysed reaction is (9Z,12Z,15Z)-octadecatrienoyl-CoA + 2 Fe(II)-[cytochrome b5] + O2 + 2 H(+) = (6Z,9Z,12Z,15Z)-octadecatetraenoyl-CoA + 2 Fe(III)-[cytochrome b5] + 2 H2O. It carries out the reaction (8Z,11Z,14Z,17Z)-eicosatetraenoyl-CoA + 2 Fe(II)-[cytochrome b5] + O2 + 2 H(+) = (5Z,8Z,11Z,14Z,17Z)-eicosapentaenoyl-CoA + 2 Fe(III)-[cytochrome b5] + 2 H2O. The enzyme catalyses (8Z,11Z,14Z)-eicosatrienoyl-CoA + 2 Fe(II)-[cytochrome b5] + O2 + 2 H(+) = (5Z,8Z,11Z,14Z)-eicosatetraenoyl-CoA + 2 Fe(III)-[cytochrome b5] + 2 H2O. It participates in lipid metabolism; polyunsaturated fatty acid biosynthesis. Its function is as follows. Fatty acid desaturase with bifunctional delta-5 and delta-6 activities. Component of a lipid metabolic pathway that catalyzes the biosynthesis of polyunsaturated fatty acids (PUFA) with preference toward n-3 substrates and Delta-6 function. In Danio rerio (Zebrafish), this protein is Acyl-CoA 6-desaturase (fads2).